The sequence spans 269 residues: ATP synthase subunit delta (269 aa).

Belongs to the ATPase delta chain family. In terms of assembly, F-type ATPases have 2 components, F(1) - the catalytic core - and F(0) - the membrane proton channel. F(1) has five subunits: alpha(3), beta(3), gamma(1), delta(1), epsilon(1). F(0) has three main subunits: a(1), b(2) and c(10-14). The alpha and beta chains form an alternating ring which encloses part of the gamma chain. F(1) is attached to F(0) by a central stalk formed by the gamma and epsilon chains, while a peripheral stalk is formed by the delta and b chains.

The protein resides in the cell membrane. F(1)F(0) ATP synthase produces ATP from ADP in the presence of a proton or sodium gradient. F-type ATPases consist of two structural domains, F(1) containing the extramembraneous catalytic core and F(0) containing the membrane proton channel, linked together by a central stalk and a peripheral stalk. During catalysis, ATP synthesis in the catalytic domain of F(1) is coupled via a rotary mechanism of the central stalk subunits to proton translocation. Its function is as follows. This protein is part of the stalk that links CF(0) to CF(1). It either transmits conformational changes from CF(0) to CF(1) or is implicated in proton conduction. The sequence is that of ATP synthase subunit delta from Nocardia farcinica (strain IFM 10152).